A 680-amino-acid chain; its full sequence is Glutamine-dependent NAD(+) synthetase (680 aa).

The region spanning 12–276 (VRVAACTHHA…EHRSVADVDT (265 aa)) is the CN hydrolase domain. The Proton acceptor; for glutaminase activity role is filled by Glu-52. The For glutaminase activity role is filled by Lys-121. Tyr-127 serves as a coordination point for L-glutamine. The Nucleophile; for glutaminase activity role is filled by Cys-176. The L-glutamine site is built by Ser-203 and Arg-209. An ATP-binding site is contributed by 366–373 (GVSGGLDS). Deamido-NAD(+) is bound at residue Asn-456. An ATP-binding site is contributed by Thr-480. Residues Glu-485, 490 to 493 (WSTY), and Lys-636 each bind deamido-NAD(+).

It in the C-terminal section; belongs to the NAD synthetase family.

The catalysed reaction is deamido-NAD(+) + L-glutamine + ATP + H2O = L-glutamate + AMP + diphosphate + NAD(+) + H(+). The protein operates within cofactor biosynthesis; NAD(+) biosynthesis; NAD(+) from deamido-NAD(+) (L-Gln route): step 1/1. In terms of biological role, catalyzes the ATP-dependent amidation of deamido-NAD to form NAD. Uses L-glutamine as a nitrogen source. This chain is Glutamine-dependent NAD(+) synthetase, found in Mycobacterium leprae (strain TN).